Here is a 312-residue protein sequence, read N- to C-terminus: Olfactory receptor 6C1 (312 aa).

The Extracellular segment spans residues 1-23 (MRNHTEITEFILLGLTDDPNFQV). N-linked (GlcNAc...) asparagine glycosylation is present at Asn3. Residues 24–44 (VIFVFLLITYMLSITGNLTLI) form a helical membrane-spanning segment. Residues 45–52 (TITLLDSH) lie on the Cytoplasmic side of the membrane. Residues 53-73 (LQTPMYFFLRNFSILEISFTT) form a helical membrane-spanning segment. Residues 74–97 (VSIPKFLGNIISGDKTISFNNCIV) are Extracellular-facing. Residues Cys95 and Cys187 are joined by a disulfide bond. The chain crosses the membrane as a helical span at residues 98 to 118 (QLFFFILLGVTEFYLLAAMSY). Residues 119–137 (DRYVAICKPLHCLSIMNRR) lie on the Cytoplasmic side of the membrane. The helical transmembrane segment at 138-158 (VCTLLVFTSWLVSFLIIFPAL) threads the bilayer. At 159 to 195 (MLLLKLHYCRSNIIDHFTCDYFPLLQLACSDTKFLEV) the chain is on the extracellular side. Residues 196–215 (MGFSCAAFTLMFTLALIFLS) traverse the membrane as a helical segment. Topologically, residues 216–235 (YIYIIRTILRIPSTSQRTKA) are cytoplasmic. Residues 236-256 (FSTCSSHMVVVSISYGSCIFM) form a helical membrane-spanning segment. Residues 257–269 (YIKPSAKDRVSLS) lie on the Extracellular side of the membrane. A helical transmembrane segment spans residues 270-290 (KGVAILNTSVAPMMNPFIYSL). Over 291–312 (RNQQVKQAFINMARKTVFFTST) the chain is Cytoplasmic.

The protein belongs to the G-protein coupled receptor 1 family.

It localises to the cell membrane. Functionally, odorant receptor. In Homo sapiens (Human), this protein is Olfactory receptor 6C1 (OR6C1).